The sequence spans 95 residues: Cell division topological specificity factor (95 aa).

Belongs to the MinE family.

Functionally, prevents the cell division inhibition by proteins MinC and MinD at internal division sites while permitting inhibition at polar sites. This ensures cell division at the proper site by restricting the formation of a division septum at the midpoint of the long axis of the cell. This chain is Cell division topological specificity factor, found in Methylorubrum extorquens (strain CM4 / NCIMB 13688) (Methylobacterium extorquens).